The sequence spans 238 residues: Putative tyrosine-protein phosphatase OCA1 (238 aa).

The tract at residues 1-43 (MTSKVGEYEDVPEDESRLTEENVSVPEEEVEDEDEEEDDDDDH) is disordered. Thr2 is modified (N-acetylthreonine). At Ser24 the chain carries Phosphoserine. Positions 26-42 (PEEEVEDEDEEEDDDDD) are enriched in acidic residues. One can recognise a Tyrosine-protein phosphatase domain in the interval 72 to 230 (NFCPVERYLY…LVKIDKNKAP (159 aa)). The active-site Phosphocysteine intermediate is Cys168.

This sequence belongs to the protein-tyrosine phosphatase family.

It is found in the cytoplasm. It carries out the reaction O-phospho-L-tyrosyl-[protein] + H2O = L-tyrosyl-[protein] + phosphate. In terms of biological role, putative tyrosine-protein phosphatase required for protection against superoxide stress. Involved in cell-cycle delay in response to linoleic acid hydroperoxide (LoaOOH). The polypeptide is Putative tyrosine-protein phosphatase OCA1 (OCA1) (Saccharomyces cerevisiae (strain YJM789) (Baker's yeast)).